We begin with the raw amino-acid sequence, 451 residues long: Tubulin beta chain (451 aa).

The GTP site is built by Q11, E69, S138, G142, T143, G144, N204, and N226. E69 serves as a coordination point for Mg(2+). The disordered stretch occupies residues 426–451 (QDATAEEEGEFDENEGAEGEEQPADY). Acidic residues predominate over residues 429–451 (TAEEEGEFDENEGAEGEEQPADY).

It belongs to the tubulin family. As to quaternary structure, dimer of alpha and beta chains. A typical microtubule is a hollow water-filled tube with an outer diameter of 25 nm and an inner diameter of 15 nM. Alpha-beta heterodimers associate head-to-tail to form protofilaments running lengthwise along the microtubule wall with the beta-tubulin subunit facing the microtubule plus end conferring a structural polarity. Microtubules usually have 13 protofilaments but different protofilament numbers can be found in some organisms and specialized cells. Mg(2+) is required as a cofactor.

It localises to the cytoplasm. Its subcellular location is the cytoskeleton. Functionally, tubulin is the major constituent of microtubules, a cylinder consisting of laterally associated linear protofilaments composed of alpha- and beta-tubulin heterodimers. Microtubules grow by the addition of GTP-tubulin dimers to the microtubule end, where a stabilizing cap forms. Below the cap, tubulin dimers are in GDP-bound state, owing to GTPase activity of alpha-tubulin. The sequence is that of Tubulin beta chain from Naegleria pringsheimi (Amoeba).